We begin with the raw amino-acid sequence, 166 residues long: MAHGRQQDELQDITLLGNQDNTYNFDYRPDVLESFDNKHQGRDYFVKFNCPEFTSLCPITGQPDFATIYISYIPNVKMVESKSLKLYLFSFRNHGDFHEDCMNIIMNDLIELMDPHYIEVWGKFTPRGGISIDPYTNYGRPNSKYEQMAEHRLMNHDLYPEKIDNR.

Catalysis depends on Cys-57, which acts as the Thioimide intermediate. Catalysis depends on Asp-64, which acts as the Proton donor. Residues 79-81 (VES) and 98-99 (HE) contribute to the substrate site.

The protein belongs to the GTP cyclohydrolase I family. QueF type 1 subfamily.

It is found in the cytoplasm. It catalyses the reaction 7-aminomethyl-7-carbaguanine + 2 NADP(+) = 7-cyano-7-deazaguanine + 2 NADPH + 3 H(+). Its pathway is tRNA modification; tRNA-queuosine biosynthesis. In terms of biological role, catalyzes the NADPH-dependent reduction of 7-cyano-7-deazaguanine (preQ0) to 7-aminomethyl-7-deazaguanine (preQ1). The polypeptide is NADPH-dependent 7-cyano-7-deazaguanine reductase (Staphylococcus aureus (strain MRSA252)).